A 309-amino-acid chain; its full sequence is Olfactory receptor 5H17 (309 aa).

Topologically, residues 1–28 (MEKKNETLWTEFVLTGLTCLPQWKPLLF) are extracellular. N-linked (GlcNAc...) asparagine glycosylation occurs at asparagine 5. A helical transmembrane segment spans residues 29-49 (LVFLVIYFMTIVGNLGLITLI). Residues 50 to 56 (WNDPHLH) are Cytoplasmic-facing. The helical transmembrane segment at 57–77 (IPMYLFLSNLAFVDTWLSSTV) threads the bilayer. Residues 78 to 93 (TPRMLFNLLDKGKVIS) lie on the Extracellular side of the membrane. A helical transmembrane segment spans residues 94–114 (VAECKTQFFSFAISVTTECFL). Cysteines 97 and 189 form a disulfide. Topologically, residues 115–144 (LAAMAYDRYAAICNPLLYPVIMTNRLCVRL) are cytoplasmic. A helical transmembrane segment spans residues 145 to 165 (LALSFIGGFLHAVIHESFLSR). The Extracellular portion of the chain corresponds to 166-198 (LTFCNSNIIYHFYCDVIPLLKISCTDPSLNYLI). Residues 199 to 219 (IFIFSGSIQVFTIMTVLISYT) traverse the membrane as a helical segment. Residues 220–239 (FVLFTILKKKSDKGIRKAFS) lie on the Cytoplasmic side of the membrane. A helical transmembrane segment spans residues 240–260 (TCGAHLLSVSLYYGPLLFMYV). At 261–271 (HPASSEVDDQD) the chain is on the extracellular side. Residues 272–292 (MILSLFYTVIIPVLNPIIYSL) form a helical membrane-spanning segment. Over 293 to 309 (RNKQVIDSLKKMLKMMV) the chain is Cytoplasmic.

This sequence belongs to the G-protein coupled receptor 1 family.

It is found in the cell membrane. Functionally, potential odorant receptor. The sequence is that of Olfactory receptor 5H17 from Mus musculus (Mouse).